A 375-amino-acid polypeptide reads, in one-letter code: Histidine biosynthesis bifunctional protein HisB (375 aa).

Residues Met-1–Pro-168 form a histidinol-phosphatase region. Asp-8 acts as the Nucleophile in catalysis. Mg(2+) contacts are provided by Asp-8, Asp-10, and Asp-128. The active-site Proton donor is Asp-10. Residues Arg-169 to Leu-375 are imidazoleglycerol-phosphate dehydratase.

It in the N-terminal section; belongs to the histidinol-phosphatase family. This sequence in the C-terminal section; belongs to the imidazoleglycerol-phosphate dehydratase family. The cofactor is Mg(2+).

Its subcellular location is the cytoplasm. The catalysed reaction is D-erythro-1-(imidazol-4-yl)glycerol 3-phosphate = 3-(imidazol-4-yl)-2-oxopropyl phosphate + H2O. The enzyme catalyses L-histidinol phosphate + H2O = L-histidinol + phosphate. It functions in the pathway amino-acid biosynthesis; L-histidine biosynthesis; L-histidine from 5-phospho-alpha-D-ribose 1-diphosphate: step 6/9. It participates in amino-acid biosynthesis; L-histidine biosynthesis; L-histidine from 5-phospho-alpha-D-ribose 1-diphosphate: step 8/9. The chain is Histidine biosynthesis bifunctional protein HisB from Xanthomonas campestris pv. campestris (strain 8004).